A 985-amino-acid polypeptide reads, in one-letter code: Rho guanine nucleotide exchange factor 2 (985 aa).

Positions 1–32 (MSRIESLTRARIDRSKEQATKTREKEKMKEAK) are disordered. A Phorbol-ester/DAG-type zinc finger spans residues 39–86 (GHLFTTISVSGMTMCYACNKSITAKEALICPTCNVTIHNRCKDTLANC). Ser-109, Ser-122, Ser-129, Ser-133, and Ser-137 each carry phosphoserine. The interval 131–161 (RQSLLGSRRGLSSLSLAKSVSTTNIAGHFND) is interaction with DYNLT1. Ser-143 is subject to Phosphoserine; by PAK4. Phosphoserine is present on residues Ser-151, Ser-163, Ser-172, Ser-174, and Ser-177. One can recognise a DH domain in the interval 236-433 (KKQDVIYELI…KELLSNVDQD (198 aa)). N6-acetyllysine is present on Lys-354. Residues 473–572 (KLIHDGCLLW…WIRVIQQSVR (100 aa)) enclose the PH domain. Residues 591 to 615 (LRRIKTKLQQKNQALVELLQMNVEL) are a coiled coil. Ser-646 and Ser-649 each carry phosphoserine. Thr-680 is subject to Phosphothreonine; by MAPK1 or MAPK3. A phosphoserine mark is found at Ser-692, Ser-710, and Ser-781. Thr-795 carries the phosphothreonine modification. A coiled-coil region spans residues 797–866 (EKQATELALL…RQLAALGQNE (70 aa)). Phosphoserine is present on Ser-885. 2 disordered regions span residues 890–909 (DALY…DRLD) and 918–985 (HRPF…ASES). Position 893 is a phosphotyrosine (Tyr-893). Ser-895 carries the phosphoserine; by PAK4 modification. The segment covering 919-938 (RPFDDREAQELGSPEDRLQD) has biased composition (basic and acidic residues). Ser-931, Ser-939, and Ser-940 each carry phosphoserine. Residues 940-949 (SDPDTCSEEE) are compositionally biased toward acidic residues. The residue at position 944 (Thr-944) is a Phosphothreonine. Ser-946, Ser-951, Ser-952, Ser-955, and Ser-959 each carry phosphoserine.

Found in a complex composed at least of ARHGEF2, NOD2 and RIPK2. Interacts with RIPK2; the interaction mediates tyrosine phosphorylation of RIPK2 by Src kinase CSK. Interacts with RIPK1 and RIPK3. Interacts with YWHAZ/14-3-3 zeta; when phosphorylated at Ser-885. Interacts with the kinases PAK4, AURKA and MAPK1. Interacts with RHOA and RAC1. Interacts with NOD1. Interacts (via the N- terminal zinc finger) with CAPN6 (via domain II). Interacts with DYNLT1. Post-translationally, phosphorylation of Ser-885 by PAK1 induces binding to protein YWHAZ, promoting its relocation to microtubules and the inhibition of its activity. Phosphorylated by AURKA and CDK1 during mitosis, which negatively regulates its activity. Phosphorylation by MAPK1 or MAPK3 increases nucleotide exchange activity. Phosphorylation by PAK4 releases GEF-H1 from the microtubules. Phosphorylated on serine, threonine and tyrosine residues in a RIPK2-dependent manner.

It is found in the cytoplasm. The protein resides in the cytoskeleton. The protein localises to the cell junction. It localises to the tight junction. Its subcellular location is the golgi apparatus. It is found in the spindle. The protein resides in the cytoplasmic vesicle. Its function is as follows. Activates Rho-GTPases by promoting the exchange of GDP for GTP. May be involved in epithelial barrier permeability, cell motility and polarization, dendritic spine morphology, antigen presentation, leukemic cell differentiation, cell cycle regulation, innate immune response, and cancer. Binds Rac-GTPases, but does not seem to promote nucleotide exchange activity toward Rac-GTPases. May stimulate instead the cortical activity of Rac. Inactive toward CDC42, TC10, or Ras-GTPases. Forms an intracellular sensing system along with NOD1 for the detection of microbial effectors during cell invasion by pathogens. Involved in innate immune signaling transduction pathway promoting cytokine IL6/interleukin-6 and TNF-alpha secretion in macrophage upon stimulation by bacterial peptidoglycans; acts as a signaling intermediate between NOD2 receptor and RIPK2 kinase. Contributes to the tyrosine phosphorylation of RIPK2 through Src tyrosine kinase leading to NF-kappaB activation by NOD2. Overexpression activates Rho-, but not Rac-GTPases, and increases paracellular permeability. Involved in neuronal progenitor cell division and differentiation. Involved in the migration of precerebellar neurons. This is Rho guanine nucleotide exchange factor 2 (Arhgef2) from Rattus norvegicus (Rat).